We begin with the raw amino-acid sequence, 310 residues long: MIVVTGGAGFIGSNIVKALNQIGYNDVLVVDNLKDGTKYANLVDLNISDYMDKEDFIASIVAGDDFGDIDAVFHEGACSSTTEWDGKYMMDNNYQYSKELLHYCMERTIPFLYASSAATYGGRTEHFIEDRQYEQPLNVYGYSKFLFDQYVRALLPQAESQICGFRYFNVYGPREGHKGGMASVAFHLNNQINAGENPKLFAGSEGFKRDFIYVGDVAAVNLWFWQNNVSGIFNCGTGRAESFQAVSDAVLDYHKKGQLEYIPFPEKLKGRYQAYTQADLTQLRAAGYTQPFKTVAEGVAEYLRWLNHNY.

Residues 10–11, 31–32, K38, K53, 75–79, and N92 each bind NADP(+); these read FI, DN, and EGACS. The active-site Proton acceptor is the Y140. K144 contacts NADP(+). Residue N169 coordinates substrate. NADP(+)-binding residues include V170 and K178. The Proton acceptor role is filled by K178. Substrate is bound by residues G180, H187, 201 to 204, R209, and Y272; that span reads FAGS.

It belongs to the NAD(P)-dependent epimerase/dehydratase family. HldD subfamily. In terms of assembly, homopentamer. It depends on NADP(+) as a cofactor.

It catalyses the reaction ADP-D-glycero-beta-D-manno-heptose = ADP-L-glycero-beta-D-manno-heptose. It participates in nucleotide-sugar biosynthesis; ADP-L-glycero-beta-D-manno-heptose biosynthesis; ADP-L-glycero-beta-D-manno-heptose from D-glycero-beta-D-manno-heptose 7-phosphate: step 4/4. Catalyzes the interconversion between ADP-D-glycero-beta-D-manno-heptose and ADP-L-glycero-beta-D-manno-heptose via an epimerization at carbon 6 of the heptose. This Sodalis glossinidius (strain morsitans) protein is ADP-L-glycero-D-manno-heptose-6-epimerase.